The following is a 610-amino-acid chain: Elongation factor 4 (610 aa).

Residues Ser7 to Lys189 enclose the tr-type G domain. GTP-binding positions include Asp19–Thr24 and Asn136–Asp139.

The protein belongs to the TRAFAC class translation factor GTPase superfamily. Classic translation factor GTPase family. LepA subfamily.

It is found in the cell inner membrane. The enzyme catalyses GTP + H2O = GDP + phosphate + H(+). In terms of biological role, required for accurate and efficient protein synthesis under certain stress conditions. May act as a fidelity factor of the translation reaction, by catalyzing a one-codon backward translocation of tRNAs on improperly translocated ribosomes. Back-translocation proceeds from a post-translocation (POST) complex to a pre-translocation (PRE) complex, thus giving elongation factor G a second chance to translocate the tRNAs correctly. Binds to ribosomes in a GTP-dependent manner. The sequence is that of Elongation factor 4 from Thermus thermophilus (strain ATCC BAA-163 / DSM 7039 / HB27).